Here is a 302-residue protein sequence, read N- to C-terminus: Pyridoxal 5'-phosphate synthase subunit PdxS (302 aa).

D32 provides a ligand contact to D-ribose 5-phosphate. The active-site Schiff-base intermediate with D-ribose 5-phosphate is the K89. G161 contacts D-ribose 5-phosphate. R173 contributes to the D-glyceraldehyde 3-phosphate binding site. D-ribose 5-phosphate is bound by residues G222 and 243–244 (GS). The disordered stretch occupies residues 276–302 (ASNIGEGMQGDPNADLPEDERMQDRGN).

This sequence belongs to the PdxS/SNZ family. In the presence of PdxT, forms a dodecamer of heterodimers.

It carries out the reaction aldehydo-D-ribose 5-phosphate + D-glyceraldehyde 3-phosphate + L-glutamine = pyridoxal 5'-phosphate + L-glutamate + phosphate + 3 H2O + H(+). The protein operates within cofactor biosynthesis; pyridoxal 5'-phosphate biosynthesis. Catalyzes the formation of pyridoxal 5'-phosphate from ribose 5-phosphate (RBP), glyceraldehyde 3-phosphate (G3P) and ammonia. The ammonia is provided by the PdxT subunit. Can also use ribulose 5-phosphate and dihydroxyacetone phosphate as substrates, resulting from enzyme-catalyzed isomerization of RBP and G3P, respectively. The sequence is that of Pyridoxal 5'-phosphate synthase subunit PdxS from Halobacterium salinarum (strain ATCC 29341 / DSM 671 / R1).